A 220-amino-acid chain; its full sequence is UPF0502 protein Pnap_3223 (220 aa).

It belongs to the UPF0502 family.

This Polaromonas naphthalenivorans (strain CJ2) protein is UPF0502 protein Pnap_3223.